The primary structure comprises 1401 residues: Lysine-specific demethylase 6A (1401 aa).

The segment at 1-1095 is interaction with SUPT6H; it reads MKSCGVSLAT…TNIDLSDDKK (1095 aa). 8 TPR repeats span residues 95–128, 132–165, 169–203, 207–240, 245–285, 286–319, 321–353, and 355–387; these read SDFF…QSDY, AAFL…DPSF, KEIH…NPCT, AEIQ…ENLS, ATIL…DPNS, GQSW…SEAS, DTWC…DHGH, and AAWM…KNCS. Polar residues predominate over residues 439 to 453; the sequence is AMNTAQQNTSDNWSG. A disordered region spans residues 439-463; it reads AMNTAQQNTSDNWSGGNAPPPVEQQ. Residues arginine 519 and arginine 549 each carry the omega-N-methylarginine modification. Polar residues-rich tracts occupy residues 596–606, 619–642, and 660–743; these read NHVTGSGSNGN, HNRT…STQG, and LSST…STAS. Residues 596 to 745 are disordered; the sequence is NHVTGSGSNG…ETPNSTASVE (150 aa). Serine 769 carries the post-translational modification Phosphoserine. Disordered stretches follow at residues 795-863, 914-941, and 1043-1080; these read GTCD…EESQ, LLDK…PPTP, and FQES…GPFK. Over residues 814–833 the composition is skewed to low complexity; the sequence is SVASSPSSAISTATPSPKST. Threonine 827 is subject to Phosphothreonine. Serine 829 bears the Phosphoserine mark. The segment covering 834-848 has biased composition (polar residues); the sequence is EQTTTNSVTSLNSPH. Over residues 918 to 931 the composition is skewed to pro residues; the sequence is CPPPRPPSSPYPPL. Basic and acidic residues predominate over residues 1046–1063; the sequence is SLREENEKRSHHKDHSDS. The JmjC domain maps to 1095–1258; that stretch reads KWKLQLHELT…YKLAVERYEW (164 aa). The Fe cation site is built by histidine 1146, glutamate 1148, and histidine 1226. Zn(2+)-binding residues include cysteine 1331, cysteine 1334, cysteine 1358, and cysteine 1361.

It belongs to the UTX family. Component of the MLL2/3 complex (also named ASCOM complex), at least composed of KMT2D/MLL2 or KMT2C/MLL3, ASH2L, RBBP5, WDR5, NCOA6, DPY30, KDM6A (or KDM6B), PAXIP1/PTIP, PAGR1 and alpha- and beta-tubulin. Interacts with TLE1. Interacts with SUPT6H. Interacts with SMARCA4. Interacts with PROSER1. L-ascorbate is required as a cofactor. It depends on Fe(2+) as a cofactor. Expressed in brain, heart and spleen.

It localises to the nucleus. It carries out the reaction N(6),N(6),N(6)-trimethyl-L-lysyl(27)-[histone H3] + 2 2-oxoglutarate + 2 O2 = N(6)-methyl-L-lysyl(27)-[histone H3] + 2 formaldehyde + 2 succinate + 2 CO2. Its function is as follows. Histone demethylase that specifically demethylates 'Lys-27' of histone H3, thereby playing a central role in histone code. Demethylates trimethylated and dimethylated but not monomethylated H3 'Lys-27'. Plays a central role in regulation of posterior development, by regulating HOX gene expression. Demethylation of 'Lys-27' of histone H3 is concomitant with methylation of 'Lys-4' of histone H3, and regulates the recruitment of the PRC1 complex and monoubiquitination of histone H2A. Plays a demethylase-independent role in chromatin remodeling to regulate T-box family member-dependent gene expression. This chain is Lysine-specific demethylase 6A (Kdm6a), found in Mus musculus (Mouse).